We begin with the raw amino-acid sequence, 146 residues long: uncharacterized protein (146 aa).

The helical transmembrane segment at 7 to 27 (FVLSITIVLVILIIIAFIWYN) threads the bilayer.

The protein belongs to the asfivirus E146L family.

The protein localises to the host membrane. The protein resides in the virion. This is an uncharacterized protein from Ornithodoros (relapsing fever ticks).